A 131-amino-acid polypeptide reads, in one-letter code: D-ribose pyranase (131 aa).

His20 (proton donor) is an active-site residue. Residues Asp28, His98, and 120 to 122 (YAN) each bind substrate.

Belongs to the RbsD / FucU family. RbsD subfamily. Homodecamer.

Its subcellular location is the cytoplasm. The enzyme catalyses beta-D-ribopyranose = beta-D-ribofuranose. It participates in carbohydrate metabolism; D-ribose degradation; D-ribose 5-phosphate from beta-D-ribopyranose: step 1/2. In terms of biological role, catalyzes the interconversion of beta-pyran and beta-furan forms of D-ribose. This Bacillus cereus (strain B4264) protein is D-ribose pyranase.